A 313-amino-acid chain; its full sequence is Ribose-phosphate pyrophosphokinase (313 aa).

Residues 37–39 (DGE) and 96–97 (RQ) contribute to the ATP site. Mg(2+) contacts are provided by His131 and Asp170. Lys193 is a catalytic residue. D-ribose 5-phosphate contacts are provided by residues Arg195, Asp219, and 223-227 (DTAGT).

This sequence belongs to the ribose-phosphate pyrophosphokinase family. Class I subfamily. Homohexamer. Mg(2+) serves as cofactor.

The protein localises to the cytoplasm. The catalysed reaction is D-ribose 5-phosphate + ATP = 5-phospho-alpha-D-ribose 1-diphosphate + AMP + H(+). The protein operates within metabolic intermediate biosynthesis; 5-phospho-alpha-D-ribose 1-diphosphate biosynthesis; 5-phospho-alpha-D-ribose 1-diphosphate from D-ribose 5-phosphate (route I): step 1/1. In terms of biological role, involved in the biosynthesis of the central metabolite phospho-alpha-D-ribosyl-1-pyrophosphate (PRPP) via the transfer of pyrophosphoryl group from ATP to 1-hydroxyl of ribose-5-phosphate (Rib-5-P). This Pseudomonas aeruginosa (strain ATCC 15692 / DSM 22644 / CIP 104116 / JCM 14847 / LMG 12228 / 1C / PRS 101 / PAO1) protein is Ribose-phosphate pyrophosphokinase.